A 203-amino-acid chain; its full sequence is Histidine biosynthesis bifunctional protein HisIE (203 aa).

A phosphoribosyl-AMP cyclohydrolase region spans residues 1–114; the sequence is MLTEQQRREL…FGDTAHQWLF (114 aa). The interval 115-203 is phosphoribosyl-ATP pyrophosphohydrolase; sequence LYQLEQLLAE…VIENLRKRHQ (89 aa).

It in the N-terminal section; belongs to the PRA-CH family. The protein in the C-terminal section; belongs to the PRA-PH family.

It localises to the cytoplasm. The enzyme catalyses 1-(5-phospho-beta-D-ribosyl)-ATP + H2O = 1-(5-phospho-beta-D-ribosyl)-5'-AMP + diphosphate + H(+). The catalysed reaction is 1-(5-phospho-beta-D-ribosyl)-5'-AMP + H2O = 1-(5-phospho-beta-D-ribosyl)-5-[(5-phospho-beta-D-ribosylamino)methylideneamino]imidazole-4-carboxamide. The protein operates within amino-acid biosynthesis; L-histidine biosynthesis; L-histidine from 5-phospho-alpha-D-ribose 1-diphosphate: step 2/9. Its pathway is amino-acid biosynthesis; L-histidine biosynthesis; L-histidine from 5-phospho-alpha-D-ribose 1-diphosphate: step 3/9. This Escherichia coli O6:H1 (strain CFT073 / ATCC 700928 / UPEC) protein is Histidine biosynthesis bifunctional protein HisIE.